We begin with the raw amino-acid sequence, 314 residues long: Olfactory receptor 1C1 (314 aa).

The Extracellular portion of the chain corresponds to 1–25 (MEKRNLTVVREFVLLGLPSSAEQQH). The chain crosses the membrane as a helical span at residues 26–49 (LLSVLFLCMYLATTLGNMLIIATI). Topologically, residues 50–57 (GFDSHLHS) are cytoplasmic. A helical membrane pass occupies residues 58 to 79 (PMYFFLSNLAFVDICFTSTTVP). Residues 80-100 (QMVVNILTGTKTISFAGCLTQ) are Extracellular-facing. Cysteine 97 and cysteine 189 are disulfide-bonded. Residues 101–120 (LFFFVSFVNMDSLLLCVMAY) traverse the membrane as a helical segment. Over 121 to 139 (DRYVAICHPLHYTARMNLC) the chain is Cytoplasmic. The chain crosses the membrane as a helical span at residues 140 to 158 (LCVQLVAGLWLVTYLHALL). Over 159-195 (HTVLIAQLSFCASNIIHHFFCDLNPLLQLSCSDVSFN) the chain is Extracellular. The chain crosses the membrane as a helical span at residues 196-219 (VMIIFAVGGLLALTPLVCILVSYG). Over 220-236 (LIFSTVLKITSTQGKQR) the chain is Cytoplasmic. A helical transmembrane segment spans residues 237 to 259 (AVSTCSCHLSVVVLFYGTAIAVY). The Extracellular portion of the chain corresponds to 260 to 272 (FSPSSPHMPESDT). The helical transmembrane segment at 273–292 (LSTIMYSMVAPMLNPFIYTL) threads the bilayer. The Cytoplasmic portion of the chain corresponds to 293-314 (RNRDMKRGLQKMLLKCTVFQQQ).

The protein belongs to the G-protein coupled receptor 1 family.

It is found in the cell membrane. Its function is as follows. Odorant receptor. This chain is Olfactory receptor 1C1 (OR1C1), found in Homo sapiens (Human).